The chain runs to 405 residues: 3-isopropylmalate dehydrogenase (405 aa).

86 to 104 (GAANTVWTTPDGRTDVRPE) contacts NAD(+). Positions 111, 121, 148, and 237 each coordinate substrate. Mg(2+)-binding residues include Asp237, Asp262, and Asp266. 301-312 (GSAPDLGKQKVN) serves as a coordination point for NAD(+). Positions 352 to 371 (ADIGGSSSTSEVGDLLPTRS) are disordered.

This sequence belongs to the isocitrate and isopropylmalate dehydrogenases family. In terms of assembly, homodimer. The cofactor is Mg(2+). Mn(2+) is required as a cofactor.

Its subcellular location is the cytoplasm. The enzyme catalyses (2R,3S)-3-isopropylmalate + NAD(+) = 4-methyl-2-oxopentanoate + CO2 + NADH. It functions in the pathway amino-acid biosynthesis; L-leucine biosynthesis; L-leucine from 3-methyl-2-oxobutanoate: step 3/4. Catalyzes the oxidation of 3-carboxy-2-hydroxy-4-methylpentanoate (3-isopropylmalate) to 3-carboxy-4-methyl-2-oxopentanoate. The product decarboxylates to 4-methyl-2 oxopentanoate. This is 3-isopropylmalate dehydrogenase (LEU2) from Yarrowia lipolytica (strain CLIB 122 / E 150) (Yeast).